We begin with the raw amino-acid sequence, 392 residues long: Protein NirF (392 aa).

The protein resides in the cytoplasm. Required for the biosynthesis of heme d1 of nitrite reductase. Could have a dehydrogenase activity yielding sirohydrochlorin from precorrin-2 or dehydrogenation of propionate side chain C17. The sequence is that of Protein NirF (nirF) from Pseudomonas aeruginosa (strain ATCC 15692 / DSM 22644 / CIP 104116 / JCM 14847 / LMG 12228 / 1C / PRS 101 / PAO1).